The chain runs to 156 residues: Ribonuclease H (156 aa).

The RNase H type-1 domain occupies 1 to 142 (MGKQVEIFTD…CDELARAAAN (142 aa)). Positions 10, 48, 70, and 134 each coordinate Mg(2+).

This sequence belongs to the RNase H family. As to quaternary structure, monomer. Mg(2+) is required as a cofactor.

The protein resides in the cytoplasm. It carries out the reaction Endonucleolytic cleavage to 5'-phosphomonoester.. Endonuclease that specifically degrades the RNA of RNA-DNA hybrids. The protein is Ribonuclease H of Photorhabdus luminescens (Xenorhabdus luminescens).